A 721-amino-acid chain; its full sequence is Polyribonucleotide nucleotidyltransferase (721 aa).

The Mg(2+) site is built by Asp495 and Asp501. Positions 562–621 (PRLLSFRIDPELIGTVIGPGGRTIKGITERTNTKIDIEDGGIVTIASHDGAAAEAAQRII) constitute a KH domain. The 69-residue stretch at 631-699 (GEVFSGTITR…NRGRINLTLR (69 aa)) folds into the S1 motif domain. A disordered region spans residues 700-721 (GVPQNGEETQSEPAPTPVAPLN).

This sequence belongs to the polyribonucleotide nucleotidyltransferase family. Mg(2+) is required as a cofactor.

It is found in the cytoplasm. It catalyses the reaction RNA(n+1) + phosphate = RNA(n) + a ribonucleoside 5'-diphosphate. Functionally, involved in mRNA degradation. Catalyzes the phosphorolysis of single-stranded polyribonucleotides processively in the 3'- to 5'-direction. This Prochlorococcus marinus (strain MIT 9303) protein is Polyribonucleotide nucleotidyltransferase.